Consider the following 468-residue polypeptide: Meiotically up-regulated gene 111 protein (468 aa).

The next 12 membrane-spanning stretches (helical) occupy residues Leu13–Thr33, Ile59–Tyr79, Val92–Tyr112, Phe116–Thr136, Ile158–Ile178, Leu190–Phe210, Pro285–Ile305, Phe330–Val350, Thr356–Ala376, Leu382–Ala402, Ala417–Val437, and Phe446–Gly466.

It is found in the membrane. Has a role in meiosis. This Schizosaccharomyces pombe (strain 972 / ATCC 24843) (Fission yeast) protein is Meiotically up-regulated gene 111 protein (mug111).